A 230-amino-acid chain; its full sequence is Heptaprenylglyceryl phosphate synthase (230 aa).

Lys-12 provides a ligand contact to sn-glycerol 1-phosphate. Mg(2+) is bound by residues Asp-14 and Thr-40. Residues 159 to 164, Gly-189, and 209 to 210 contribute to the sn-glycerol 1-phosphate site; these read YIEYSG and GD.

Belongs to the GGGP/HepGP synthase family. Group I subfamily. As to quaternary structure, homodimer. The cofactor is Mg(2+).

The enzyme catalyses sn-glycerol 1-phosphate + all-trans-heptaprenyl diphosphate = 3-heptaprenyl-sn-glycero-1-phosphate + diphosphate. It functions in the pathway membrane lipid metabolism; glycerophospholipid metabolism. Its function is as follows. Prenyltransferase that catalyzes in vivo the transfer of the heptaprenyl moiety of heptaprenyl pyrophosphate (HepPP; 35 carbon atoms) to the C3 hydroxyl of sn-glycerol-1-phosphate (G1P), producing heptaprenylglyceryl phosphate (HepGP). This reaction is an ether-bond-formation step in the biosynthesis of archaea-type G1P-based membrane lipids found in Bacillales. The polypeptide is Heptaprenylglyceryl phosphate synthase (Staphylococcus aureus (strain USA300)).